The chain runs to 102 residues: NADH-quinone oxidoreductase subunit K 2 (102 aa).

3 helical membrane-spanning segments follow: residues 6–26, 30–50, and 66–86; these read LEAF…GIIA, LVTV…ALVG, and FIIA…IAIF.

Belongs to the complex I subunit 4L family. NDH-1 is composed of 14 different subunits. Subunits NuoA, H, J, K, L, M, N constitute the membrane sector of the complex.

Its subcellular location is the cell inner membrane. It catalyses the reaction a quinone + NADH + 5 H(+)(in) = a quinol + NAD(+) + 4 H(+)(out). In terms of biological role, NDH-1 shuttles electrons from NADH, via FMN and iron-sulfur (Fe-S) centers, to quinones in the respiratory chain. The immediate electron acceptor for the enzyme in this species is believed to be ubiquinone. Couples the redox reaction to proton translocation (for every two electrons transferred, four hydrogen ions are translocated across the cytoplasmic membrane), and thus conserves the redox energy in a proton gradient. In Aquifex aeolicus (strain VF5), this protein is NADH-quinone oxidoreductase subunit K 2.